Here is an 82-residue protein sequence, read N- to C-terminus: Penaeidin-3i (82 aa).

The signal sequence occupies residues 1–19 (MRLVVCLVFLASFALVCQG). Q20 carries the post-translational modification Pyrrolidone carboxylic acid. 2 disulfides stabilise this stretch: C55–C73 and C67–C74. Serine amide is present on S81.

This sequence belongs to the penaeidin family.

Its subcellular location is the cytoplasmic granule. In terms of biological role, antibacterial and antifungal activity. Presents chitin-binding activity. The sequence is that of Penaeidin-3i from Penaeus vannamei (Whiteleg shrimp).